The sequence spans 79 residues: UPF0181 protein PC1_1931 (79 aa).

The segment at 54–79 (FDEDDDTVNDSDEEHYFDDGEEEDEQ) is disordered.

It belongs to the UPF0181 family.

In Pectobacterium carotovorum subsp. carotovorum (strain PC1), this protein is UPF0181 protein PC1_1931.